A 521-amino-acid polypeptide reads, in one-letter code: Vang-like protein 2 (521 aa).

The segment at 1–81 (MDNDSQYSGY…TTVVTGTSEH (81 aa)) is disordered. Residues 1 to 108 (MDNDSQYSGY…AKLDCSRHLG (108 aa)) are Cytoplasmic-facing. The segment covering 15 to 33 (GHSRSSRKHRDRRERHRSK) has biased composition (basic residues). The segment covering 57–67 (ESTRGEDRDDN) has biased composition (basic and acidic residues). The span at 69–81 (GETTTVVTGTSEH) shows a compositional bias: low complexity. Residues 109 to 129 (VVIGGALALLSFLTPIAFMLL) traverse the membrane as a helical segment. Topologically, residues 130–147 (PQILWREDLEQCGTACEG) are extracellular. The helical transmembrane segment at 148–168 (LFISVAFKLLILLLGSWALFF) threads the bilayer. The Cytoplasmic portion of the chain corresponds to 169–178 (RRPKAFFPRV). The chain crosses the membrane as a helical span at residues 179 to 199 (FVFRALLMVLVFLLVVSYWLF). Residues 200-218 (YGVRILESRDKNYQGIVQY) lie on the Extracellular side of the membrane. The chain crosses the membrane as a helical span at residues 219–239 (AVSLVDALLFVHYLAVVLLEL). Over 240 to 521 (RQLQPQFTVK…VMRLQSETSV (282 aa)) the chain is Cytoplasmic. The PDZ-binding motif lies at 518 to 521 (ETSV).

Belongs to the Vang family. As to quaternary structure, interacts with dvl/dsh. Interacts with prickle3.

It is found in the cell membrane. Its function is as follows. Has a role in non-canonical Wnt/planar cell polarity (PCP) signaling; can recruit dvl/dsh and prickle from the cytoplasm to the plasma membrane. Acts in a PCP complex to regulate the polarized assembly of fibronectrin on the surface of the mesoderm during gastrulation. Regulates convergent extension in both dorsal mesoderm and neural tissue without affecting cell fate. Regulates neural fold closure during neurulation. May be required for cell surface localization of fzd3 and fzd6 in the inner ear. This Xenopus tropicalis (Western clawed frog) protein is Vang-like protein 2.